A 226-amino-acid polypeptide reads, in one-letter code: Cobalt transport protein CbiM 1 (226 aa).

The next 6 helical transmembrane spans lie at 6 to 26 (GFLPVEHAIGWSVASAPVVAY), 43 to 63 (MLLGVAAAFTFVLSALKMPSV), 75 to 95 (LGAILFGPSAVAPIGAVVLLF), 107 to 127 (TLGANIFSMAIVGPFAAAAVF), 135 to 155 (FPFGVGVFLAASLGDLLTYVT), and 181 to 201 (VFALTQIPLAISEGLLTVVVM).

This sequence belongs to the CbiM family. In terms of assembly, forms an energy-coupling factor (ECF) transporter complex composed of an ATP-binding protein (A component, CbiO), a transmembrane protein (T component, CbiQ) and 2 possible substrate-capture proteins (S components, CbiM and CbiN) of unknown stoichimetry.

It localises to the cell inner membrane. It participates in cofactor biosynthesis; adenosylcobalamin biosynthesis. Functionally, part of the energy-coupling factor (ECF) transporter complex CbiMNOQ involved in cobalt import. In Pelobacter propionicus (strain DSM 2379 / NBRC 103807 / OttBd1), this protein is Cobalt transport protein CbiM 1 (cbim1).